Here is a 227-residue protein sequence, read N- to C-terminus: Lipoprotein-releasing system ATP-binding protein LolD (227 aa).

An ABC transporter domain is found at Leu-6–Ala-227. Gly-42–Ser-49 provides a ligand contact to ATP.

This sequence belongs to the ABC transporter superfamily. Lipoprotein translocase (TC 3.A.1.125) family. The complex is composed of two ATP-binding proteins (LolD) and two transmembrane proteins (LolC and LolE).

It localises to the cell inner membrane. Functionally, part of the ABC transporter complex LolCDE involved in the translocation of mature outer membrane-directed lipoproteins, from the inner membrane to the periplasmic chaperone, LolA. Responsible for the formation of the LolA-lipoprotein complex in an ATP-dependent manner. This is Lipoprotein-releasing system ATP-binding protein LolD from Haemophilus influenzae (strain 86-028NP).